A 276-amino-acid polypeptide reads, in one-letter code: NAD-capped RNA hydrolase NudC (276 aa).

Arg-82 contributes to the substrate binding site. Zn(2+) contacts are provided by Cys-112 and Cys-115. Glu-125 lines the substrate pocket. Zn(2+)-binding residues include Cys-130 and Cys-133. Position 138 (Tyr-138) interacts with substrate. In terms of domain architecture, Nudix hydrolase spans 139-262; the sequence is PRISPSMIVL…SIARYLIDLY (124 aa). The a divalent metal cation site is built by Ala-172, Glu-188, and Glu-192. The Nudix box signature appears at 173–194; it reads GFAEPGESAEDCLVREVREEVA. 206-213 contacts substrate; it reads QCWPFPHS. Residue Glu-233 coordinates a divalent metal cation. Substrate is bound at residue Ala-255.

It belongs to the Nudix hydrolase family. NudC subfamily. Homodimer. It depends on Mg(2+) as a cofactor. The cofactor is Mn(2+). Requires Zn(2+) as cofactor.

It catalyses the reaction a 5'-end NAD(+)-phospho-ribonucleoside in mRNA + H2O = a 5'-end phospho-adenosine-phospho-ribonucleoside in mRNA + beta-nicotinamide D-ribonucleotide + 2 H(+). The enzyme catalyses NAD(+) + H2O = beta-nicotinamide D-ribonucleotide + AMP + 2 H(+). It carries out the reaction NADH + H2O = reduced beta-nicotinamide D-ribonucleotide + AMP + 2 H(+). MRNA decapping enzyme that specifically removes the nicotinamide adenine dinucleotide (NAD) cap from a subset of mRNAs by hydrolyzing the diphosphate linkage to produce nicotinamide mononucleotide (NMN) and 5' monophosphate mRNA. The NAD-cap is present at the 5'-end of some mRNAs and stabilizes RNA against 5'-processing. Has preference for mRNAs with a 5'-end purine. Catalyzes the hydrolysis of a broad range of dinucleotide pyrophosphates. The chain is NAD-capped RNA hydrolase NudC from Pseudomonas putida (strain ATCC 700007 / DSM 6899 / JCM 31910 / BCRC 17059 / LMG 24140 / F1).